Here is a 38-residue protein sequence, read N- to C-terminus: Antifungal protein 5 (38 aa).

It belongs to the plant LTP family.

Its function is as follows. Possesses potent antifungal activity against F.graminearum but not P.infestans. The protein is Antifungal protein 5 of Malva parviflora (Little mallow).